The following is a 150-amino-acid chain: MTTFLIKHKASGKFLHPYGGSSNPANNTKLVLHSDIHERMYFQFDVVDERWGYIKHVASGKIVHPYGGQANPPNETNMVLHQDRHDRALFAMDFFNDNIMHKGGKYIHPKGGSPNPPNNTETVIHGDKHAAMEFIFVSPKNKDKRVLVYA.

D-galactose contacts are provided by His16 and Gly19. A glycan (N-linked (GlcNAc...) asparagine) is linked at Asn26. Residues Asn27, 35-37 (DIH), His64, and Gly67 each bind D-galactose. The N-linked (GlcNAc...) asparagine glycan is linked to Asn74. Residues Glu75, 83–85 (DRH), His108, and Gly111 each bind D-galactose. An N-linked (GlcNAc...) asparagine glycan is attached at Asn118. D-galactose-binding positions include Asn119 and 127–129 (DKH).

As to quaternary structure, monomer in solution. Homodimer in solution. Exists as a monomer in solution when a low concentration (0.001 mg/ml) of it is present. Homodimers start to appear at a concentration of 0.01 mg/ml and tetramers at a concentration of 0.1 mg/ml. Highly expressed in mantle and to a lesser extent in muscle, hepatopancreas, gill and hemocytes.

Bacterial binding activity is inhibited by D-galactose. Hemagglutinating activity is independent of divalent cations Ca2(+) or Mg2(+). It is strongly inhibited by N-acetyl-D-galactosamine (GalNAc), D-galactose and D-talose, and to a lesser extent by melibiose and raffinose. Also inhibited by glycoprotein asialo-bovine submaxillary mucin (BSM). Not inhibited by D-glucose, D-fucose, D-galactitol, N-acetyl-D-glucosamine or lactose. Fungal binding activity is inhibited by D-galactose. Cytotoxic activity against Raji cell line is completely inhibited by galactose, melibiose and raffinose, but not by glucose or lactose. Galactose inhibits binding to laminin and BSM, but not to collagen, gelatin or fibronectin. Galactose-binding lectin. Binds both alpha and beta anomer of galactose (Gal), but has a stronger interaction with the glycans having alpha Gal at the non-reducing end and binds beta Gal weakly only in highly branched glycans. Has high affinity to Galalpha1-4Galbeta1-4GlcNAc. Binds N-acetyl-2-deoxy-2-amino-galactose (2-deoxy-GalNAc). Binds N-acetylgalactosamine (GalNAc). Binds porcine stomach mucin (PSM) with high affinity. Binds galactosamine. Binds laminin, bovine submaxillary mucin (BSM), fibronectin, type I collagen and gelatin with a decreasing affinity, respectively. Has hemagglutinating activity towards human type A erythrocytes. Also hemagglutinates human type 0, B and AB erythrocytes as well as rabbit and mouse erythrocytes. Agglutinates both Gram-positive and Gram-negative bacteria including B.subtilis ATCC 6633, S.aureus ATCC 21027 and E.coli 3254, respectively. No agglutination activity towards Gram-positive S.amurskyense CMM 3673. Has bacteriostatic activity on S.amurskyense CMM 3673, B.subtilis ATCC 6633, S.aureus ATCC 21027 and E.coli 3254. However, has no agglutination nor bacteriostatic activity on Gram-negative C.scophthalmum CIP 104199 or A.troitsensis KMM 3674. Inhibits growth of fungi from the genera Aspergillus, Penicillium, Trichoderma and st. Mycelia. Inhibits germination of spores and hyphal growth of them. Has dose-dependent cytotoxic effect on the human globotriaosylceramide (Gb3)-expressing Burkitt's lymphoma (Raji) cell line. Binds to Gb3 in these cells leading to activation of caspase-9/3 and PARP. Has dose-dependent cytotoxic effect on the Gb3-expressing human MCF-7 breast cancer cell line. No cytotoxic effect on myelogenous leukemia K562 cell line, which does not express Gb3. Activates immune responses in mice and increases cytokine production of TNF-alpha, IL-6 and MCP-1 in the serum and the peritoneal lavage of mice. Induces TNF-alpha and IL-6 secretion in mouse RAW264.7 macrophages, mouse bone marrow-derived macrophages, human THP-1 macrophages, human peripheral blood mononuclear cells (PBMCs) and human blood monocyte-derived macrophages. TNF-alpha production in macrophages could not be inhibited by GalNAc, GalN or Gal, indicating that induced cytokine production is separate from its sugar binding activity. Increases intracellular reactive oxygen species levels, expression and phosphorylation of protein kinases PKC alpha/delta, expression of COX-2 and NF-kappaB, and activates the MAPK pathway by increasing the phosphorylation of ERK1/2, JNK1/2 and p38 in mouse RAW264.7 macrophages. Induces endotoxin tolerance in lipopolysaccharide(LPS)-activated macrophages by down-regulating IRAK2 expression, reducing JNK1/2 phosphorylation and NF-kappaB activation. Can slightly increase the bactericidal activity of RAW264.7 macrophages. Has DNA-binding activity. Recognizes pathogen-associated molecular patterns (PAMPs) and binds to LPS from E.coli, but has only little binding to beta-1,3-glucan from E.gracilis and peptidoglycan from S.aureus. Activates secretion of TNF-alpha and IFN-gamma by the human peripheral blood cells (HPBCs). May be involved in innate immunity acting as an antibacterial and antifungal agent involved in the recognition and clearance of pathogens. The protein is Galactose-binding lectin of Crenomytilus grayanus (Gray mussel).